A 307-amino-acid polypeptide reads, in one-letter code: Lipoyl synthase (307 aa).

[4Fe-4S] cluster contacts are provided by cysteine 55, cysteine 60, cysteine 66, cysteine 81, cysteine 85, cysteine 88, and serine 292. The region spanning 67–281 (WEDREATFLI…ARHAEELGFS (215 aa)) is the Radical SAM core domain.

It belongs to the radical SAM superfamily. Lipoyl synthase family. It depends on [4Fe-4S] cluster as a cofactor.

The protein localises to the cytoplasm. It carries out the reaction [[Fe-S] cluster scaffold protein carrying a second [4Fe-4S](2+) cluster] + N(6)-octanoyl-L-lysyl-[protein] + 2 oxidized [2Fe-2S]-[ferredoxin] + 2 S-adenosyl-L-methionine + 4 H(+) = [[Fe-S] cluster scaffold protein] + N(6)-[(R)-dihydrolipoyl]-L-lysyl-[protein] + 4 Fe(3+) + 2 hydrogen sulfide + 2 5'-deoxyadenosine + 2 L-methionine + 2 reduced [2Fe-2S]-[ferredoxin]. Its pathway is protein modification; protein lipoylation via endogenous pathway; protein N(6)-(lipoyl)lysine from octanoyl-[acyl-carrier-protein]: step 2/2. Catalyzes the radical-mediated insertion of two sulfur atoms into the C-6 and C-8 positions of the octanoyl moiety bound to the lipoyl domains of lipoate-dependent enzymes, thereby converting the octanoylated domains into lipoylated derivatives. This chain is Lipoyl synthase, found in Mycolicibacterium paratuberculosis (strain ATCC BAA-968 / K-10) (Mycobacterium paratuberculosis).